The primary structure comprises 437 residues: Tol-Pal system protein TolB (437 aa).

Positions 1–30 (MLPTPSRSHKLSGYAAVLFFLWLVCSPAQA) are cleaved as a signal peptide. Positions 410-423 (SDGRTRQQLSTQTG) are enriched in polar residues. Residues 410–437 (SDGRTRQQLSTQTGDIREPAWGPLRRLQ) are disordered.

The protein belongs to the TolB family. In terms of assembly, the Tol-Pal system is composed of five core proteins: the inner membrane proteins TolA, TolQ and TolR, the periplasmic protein TolB and the outer membrane protein Pal. They form a network linking the inner and outer membranes and the peptidoglycan layer.

It localises to the periplasm. Its function is as follows. Part of the Tol-Pal system, which plays a role in outer membrane invagination during cell division and is important for maintaining outer membrane integrity. The chain is Tol-Pal system protein TolB from Nitrosospira multiformis (strain ATCC 25196 / NCIMB 11849 / C 71).